The sequence spans 214 residues: Uracil phosphoribosyltransferase (214 aa).

5-phospho-alpha-D-ribose 1-diphosphate contacts are provided by residues R81, R106, and 133 to 141 (DPMLATGNS). Residues I196 and 201-203 (GDA) each bind uracil. D202 is a binding site for 5-phospho-alpha-D-ribose 1-diphosphate.

Belongs to the UPRTase family. Requires Mg(2+) as cofactor.

It catalyses the reaction UMP + diphosphate = 5-phospho-alpha-D-ribose 1-diphosphate + uracil. Its pathway is pyrimidine metabolism; UMP biosynthesis via salvage pathway; UMP from uracil: step 1/1. Its activity is regulated as follows. Allosterically activated by GTP. Functionally, catalyzes the conversion of uracil and 5-phospho-alpha-D-ribose 1-diphosphate (PRPP) to UMP and diphosphate. In Legionella pneumophila (strain Paris), this protein is Uracil phosphoribosyltransferase.